The chain runs to 384 residues: MLSGLWSSILALLGVFLQSVGEFRAETQEQDVEIVQKYLKNYYNSDKRNSGLVVEILKQFFGLKVTGKPDAETLVMKQSTCGVPDVGEYVLTPGNPRWENTHLTYRIENYTPDLVSPLTFTKVSEGQADIMISFVRGDHRDKYPFDGPGGNLAHASQPGPGIGGDAHFDEYERWTKNFQDYNLYRVAAHELGHSLGLSHSTDIGALMYPTYLRGDVQLSQDDIDGPSGNPVQPRGPQTPQVCDSKLTFDAITTVRGELMFFKMRTNRFYPEVELGLQAAYEMADRDEVRFFKGNKYWAVSGQDVLYGYPKDIHSSFGFPTGVAHECWSYDEYKQSMDTGYADEFPGDAVFQKFFHGTRQYQFDLKTKRILTLQKANSWFNCRKN.

The N-terminal stretch at 1–25 is a signal peptide; the sequence is MLSGLWSSILALLGVFLQSVGEFRA. Residues 26-88 constitute a propeptide, activation peptide; it reads ETQEQDVEIV…STCGVPDVGE (63 aa). Residues 79–86 carry the Cysteine switch motif; that stretch reads STCGVPDV. Position 81 (C81) interacts with Zn(2+). Positions 113 and 129 each coordinate Ca(2+). The Zn(2+) site is built by H139 and D141. Positions 146, 147, 149, and 151 each coordinate Ca(2+). H154 is a binding site for Zn(2+). Residues G161, G163, and D165 each coordinate Ca(2+). H167 is a binding site for Zn(2+). 3 residues coordinate Ca(2+): D169, E170, and E172. H189 lines the Zn(2+) pocket. The active site involves E190. H193 and H199 together coordinate Zn(2+). Residues 218-239 form a disordered region; the sequence is LSQDDIDGPSGNPVQPRGPQTP. An intrachain disulfide couples C242 to C381. Ca(2+) contacts are provided by D249, Q277, and D347. Hemopexin repeat units lie at residues 273–319 and 333–381; these read ELGL…FGFP and KQSM…WFNC.

Belongs to the peptidase M10A family. Ca(2+) is required as a cofactor. Zn(2+) serves as cofactor.

It localises to the secreted. Its subcellular location is the extracellular space. The protein resides in the extracellular matrix. It carries out the reaction Cleavage of the triple helix of collagen at about three-quarters of the length of the molecule from the N-terminus, at 775-Gly-|-Ile-776 in the alpha1(I) chain. Cleaves synthetic substrates and alpha-macroglobulins at bonds where P1' is a hydrophobic residue.. Can be activated without removal of the activation peptide. Cleaves collagens of types I, II, and III at one site in the helical domain. Also cleaves collagens of types VII and X. This is Interstitial collagenase from Aquarana catesbeiana (American bullfrog).